We begin with the raw amino-acid sequence, 307 residues long: Putative ankyrin repeat protein R229 (307 aa).

6 ANK repeats span residues 135–164 (ASRV…DINV), 165–194 (DNDK…NVHA), 196–224 (DDEA…NVNA), 226–254 (NDYA…NPMA), 256–284 (RYYP…SMVY), and 286–307 (SYAM…LLLD).

The sequence is that of Putative ankyrin repeat protein R229 from Acanthamoeba polyphaga (Amoeba).